The sequence spans 96 residues: Small ribosomal subunit protein bS6 (96 aa).

The protein belongs to the bacterial ribosomal protein bS6 family.

Its function is as follows. Binds together with bS18 to 16S ribosomal RNA. The polypeptide is Small ribosomal subunit protein bS6 (Streptococcus sanguinis (strain SK36)).